The chain runs to 256 residues: MAAKPGAATPTYSPKIVGRSRLPIFKDSDLDWSRPDGRGFHQCRPALLQTGAVSSASGSAYAEFGNTKVIVSVFGPRESKKAMVYSDVGRLNCNVSYTNFASPTLGQGTDHKEYSSMLHKALEGVIMMETFPKTTVDVFALVLESGGSDLSVLISCASLALADAGIMMYDLITAVSVSCIGKSLMIDPVTEEEGCEDGSFMMTCMPSRYEITQLTITGEWTTPNINEAMQLCLDASSKLGEIMRDCLKQSASASDE.

This sequence belongs to the RNase PH family. As to quaternary structure, probable component of the RNA exosome complex. In terms of tissue distribution, highly expressed in imbibed seeds and young seedlings.

The protein localises to the cytoplasm. Its subcellular location is the nucleus. Functionally, non-catalytic component of the RNA exosome complex which has 3'-&gt;5' exoribonuclease activity and participates in a multitude of cellular RNA processing, maturation and degradation events. In vitro, is a processive phosphorolytic exonuclease and requires a single-stranded poly(A) tail on the substrate RNA for its activity. Plays an important role in seed germination and early seedling growth by mediating specific cytoplasmic mRNA decay of transcripts coding for the abscisic acid (ABA) biosynthetic enzymes NCED5 and NCED6, and the ABA signaling transcription factors ABI3 and ABI4. The protein is Exosome complex component RRP41-like of Arabidopsis thaliana (Mouse-ear cress).